The primary structure comprises 368 residues: MFHRLWTLIRKELQSLLREPQTRAILILPVLIQVILFPFAATLEVTNATIAIYDEDNGEHSVELTQRFARASAFTHVLLLKSPQEIRPTIDTQKALLLVRFPADFSRKLDTFQTAPLQLILDGRNSNSAQIAANYLQQIVKNYQQELLEGKPKPNNSELVVRNWYNPNLDYKWFVVPSLIAMITTIGVMIVTSLSVAREREQGTLDQLLVSPLTTWQIFIGKAVPALIVATFQATIVLAIGIWAYQIPFAGSLALFYFTMVIYGLSLVGFGLLISSLCSTQQQAFIGVFVFMMPAILLSGYVSPVENMPVWLQNLTWINPIRHFTDITKQIYLKDASLDIVWNSLWPLLVITATTGSAAYAMFRRKVM.

At 1 to 24 (MFHRLWTLIRKELQSLLREPQTRA) the chain is on the cytoplasmic side. A helical membrane pass occupies residues 25–45 (ILILPVLIQVILFPFAATLEV). Residues 46–173 (TNATIAIYDE…WYNPNLDYKW (128 aa)) lie on the Periplasmic side of the membrane. The region spanning 129-366 (AQIAANYLQQ…SAAYAMFRRK (238 aa)) is the ABC transmembrane type-2 domain. The chain crosses the membrane as a helical span at residues 174-194 (FVVPSLIAMITTIGVMIVTSL). The Cytoplasmic segment spans residues 195-222 (SVAREREQGTLDQLLVSPLTTWQIFIGK). The helical transmembrane segment at 223–243 (AVPALIVATFQATIVLAIGIW) threads the bilayer. The Periplasmic segment spans residues 244-253 (AYQIPFAGSL). The chain crosses the membrane as a helical span at residues 254–274 (ALFYFTMVIYGLSLVGFGLLI). Residues 275 to 284 (SSLCSTQQQA) are Cytoplasmic-facing. Residues 285 to 305 (FIGVFVFMMPAILLSGYVSPV) form a helical membrane-spanning segment. Over 306-339 (ENMPVWLQNLTWINPIRHFTDITKQIYLKDASLD) the chain is Periplasmic. The helical transmembrane segment at 340–360 (IVWNSLWPLLVITATTGSAAY) threads the bilayer. The Cytoplasmic portion of the chain corresponds to 361–368 (AMFRRKVM).

This sequence belongs to the ABC-2 integral membrane protein family. In terms of assembly, the complex is probably composed of two ATP-binding proteins (YbhF) and two transmembrane proteins (YbhR and YbhS).

Its subcellular location is the cell inner membrane. Part of the ABC transporter complex YbhFSR that could be involved in efflux of cefoperazone. Probably involved in the translocation of the substrate across the membrane. The sequence is that of Probable multidrug ABC transporter permease YbhR (ybhR) from Escherichia coli O157:H7.